We begin with the raw amino-acid sequence, 92 residues long: MANSPSAKKRAIQAEKRRSHNASLRSMVRTYIKNVVKAIDAKDLDKARAAYTAAVPVIDRMADKGIIHKNKAARHKSRLNGHIKALGEAAAA.

Residues 1–23 are disordered; it reads MANSPSAKKRAIQAEKRRSHNAS.

The protein belongs to the bacterial ribosomal protein bS20 family.

Binds directly to 16S ribosomal RNA. This is Small ribosomal subunit protein bS20 from Stutzerimonas stutzeri (strain A1501) (Pseudomonas stutzeri).